The primary structure comprises 455 residues: Kynureninase (455 aa).

Pyridoxal 5'-phosphate-binding positions include Leu94, Thr95, 122–125 (FPSD), Asp208, His211, and Tyr233. Lys234 bears the N6-(pyridoxal phosphate)lysine mark. Pyridoxal 5'-phosphate-binding residues include Trp275 and Asn303.

Belongs to the kynureninase family. Homodimer. Requires pyridoxal 5'-phosphate as cofactor.

The protein resides in the cytoplasm. It catalyses the reaction L-kynurenine + H2O = anthranilate + L-alanine + H(+). It carries out the reaction 3-hydroxy-L-kynurenine + H2O = 3-hydroxyanthranilate + L-alanine + H(+). Its pathway is amino-acid degradation; L-kynurenine degradation; L-alanine and anthranilate from L-kynurenine: step 1/1. It participates in cofactor biosynthesis; NAD(+) biosynthesis; quinolinate from L-kynurenine: step 2/3. In terms of biological role, catalyzes the cleavage of L-kynurenine (L-Kyn) and L-3-hydroxykynurenine (L-3OHKyn) into anthranilic acid (AA) and 3-hydroxyanthranilic acid (3-OHAA), respectively. The sequence is that of Kynureninase from Vanderwaltozyma polyspora (strain ATCC 22028 / DSM 70294 / BCRC 21397 / CBS 2163 / NBRC 10782 / NRRL Y-8283 / UCD 57-17) (Kluyveromyces polysporus).